A 754-amino-acid chain; its full sequence is 5-methyltetrahydropteroyltriglutamate--homocysteine methyltransferase (754 aa).

5-methyltetrahydropteroyltri-L-glutamate-binding positions include 15 to 18 and K114; that span reads RELK. L-homocysteine is bound by residues 430-432 and E483; that span reads IGS. L-methionine contacts are provided by residues 430–432 and E483; that span reads IGS. 5-methyltetrahydropteroyltri-L-glutamate-binding positions include 514-515 and W560; that span reads RC. An L-homocysteine-binding site is contributed by D598. D598 is an L-methionine binding site. 5-methyltetrahydropteroyltri-L-glutamate is bound at residue E604. Positions 641, 643, and 665 each coordinate Zn(2+). H694 (proton donor) is an active-site residue. C726 serves as a coordination point for Zn(2+).

It belongs to the vitamin-B12 independent methionine synthase family. Zn(2+) is required as a cofactor.

The catalysed reaction is 5-methyltetrahydropteroyltri-L-glutamate + L-homocysteine = tetrahydropteroyltri-L-glutamate + L-methionine. It participates in amino-acid biosynthesis; L-methionine biosynthesis via de novo pathway; L-methionine from L-homocysteine (MetE route): step 1/1. Catalyzes the transfer of a methyl group from 5-methyltetrahydrofolate to homocysteine resulting in methionine formation. This chain is 5-methyltetrahydropteroyltriglutamate--homocysteine methyltransferase, found in Campylobacter jejuni (strain RM1221).